The sequence spans 112 residues: UPF0251 protein MA_4245 (112 aa).

It belongs to the UPF0251 family.

The polypeptide is UPF0251 protein MA_4245 (Methanosarcina acetivorans (strain ATCC 35395 / DSM 2834 / JCM 12185 / C2A)).